We begin with the raw amino-acid sequence, 325 residues long: Biotin synthase (325 aa).

A Radical SAM core domain is found at Tyr-42–Arg-270. 3 residues coordinate [4Fe-4S] cluster: Cys-57, Cys-61, and Cys-64. Positions 101, 133, 193, and 265 each coordinate [2Fe-2S] cluster.

Belongs to the radical SAM superfamily. Biotin synthase family. In terms of assembly, homodimer. It depends on [4Fe-4S] cluster as a cofactor. [2Fe-2S] cluster serves as cofactor.

It catalyses the reaction (4R,5S)-dethiobiotin + (sulfur carrier)-SH + 2 reduced [2Fe-2S]-[ferredoxin] + 2 S-adenosyl-L-methionine = (sulfur carrier)-H + biotin + 2 5'-deoxyadenosine + 2 L-methionine + 2 oxidized [2Fe-2S]-[ferredoxin]. The protein operates within cofactor biosynthesis; biotin biosynthesis; biotin from 7,8-diaminononanoate: step 2/2. Its function is as follows. Catalyzes the conversion of dethiobiotin (DTB) to biotin by the insertion of a sulfur atom into dethiobiotin via a radical-based mechanism. In Synechococcus sp. (strain WH7803), this protein is Biotin synthase.